The chain runs to 208 residues: MRPLTARQTEVLELIKTTMQETGMPPTRAEIARQLGFRSANAAEEHLKALARKGVIEILPGTSRGIKLNIPLDNEAEEEEGLPLIGRVAAGEPILAQEHVESHYKVDPALFQPQADFLLRVNGMSMKDIGILDGDLLAVHRTTDVHNGQVVVARVDEDVTVKRLEKRGREVLLHAENEEFSPIKVDLANEPFAIEGIAVGVIRNADWM.

Residues 28 to 48 (RAEIARQLGFRSANAAEEHLK) constitute a DNA-binding region (H-T-H motif). Catalysis depends on for autocatalytic cleavage activity residues Ser125 and Lys162.

The protein belongs to the peptidase S24 family. In terms of assembly, homodimer.

It catalyses the reaction Hydrolysis of Ala-|-Gly bond in repressor LexA.. Represses a number of genes involved in the response to DNA damage (SOS response), including recA and lexA. In the presence of single-stranded DNA, RecA interacts with LexA causing an autocatalytic cleavage which disrupts the DNA-binding part of LexA, leading to derepression of the SOS regulon and eventually DNA repair. This is LexA repressor from Alteromonas mediterranea (strain DSM 17117 / CIP 110805 / LMG 28347 / Deep ecotype).